The primary structure comprises 302 residues: MTLRHPILAELDPARPILIAGPTASGKSALALEIAEAQGGTVVNADALQVWSCWRLLTARPTAEDEARAPHALYGHVAPDRAYSVGAWLAEVAALMDKGCDSGRGRLIVTGGTGLYLNALSRGLAVIPPTPPEIRAQADQLVRQPGGLARMIEDLDSSTRARIDLRNPARVQRAWEVLTTTGRGIAAWQAETPPPLIDPAAAHLLVLNPDRDWLAERIARRFHLMLEQGALDEVRAMLPHWNPDALWAKAIGAPELVAHLQGRIDLDEAARRAVIATRQYAKAQRSFFRGRMRDWRWIGIGG.

An ATP-binding site is contributed by 21 to 28; sequence GPTASGKS. 23–28 is a substrate binding site; sequence TASGKS.

This sequence belongs to the IPP transferase family. Monomer. Mg(2+) serves as cofactor.

The catalysed reaction is adenosine(37) in tRNA + dimethylallyl diphosphate = N(6)-dimethylallyladenosine(37) in tRNA + diphosphate. Catalyzes the transfer of a dimethylallyl group onto the adenine at position 37 in tRNAs that read codons beginning with uridine, leading to the formation of N6-(dimethylallyl)adenosine (i(6)A). The sequence is that of tRNA dimethylallyltransferase from Paracoccus denitrificans (strain Pd 1222).